A 452-amino-acid chain; its full sequence is Pre-mRNA-splicing factor prp46 (452 aa).

The span at 61–70 (AAKQAQAAAA) shows a compositional bias: low complexity. Residues 61–129 (AAKQAQAAAA…SATRQQPPEW (69 aa)) form a disordered region. Positions 114–125 (SLIQRPSATRQQ) are enriched in polar residues. WD repeat units lie at residues 141–180 (GHLGWVRSLAVEPNNEWFASGAGDRTIKIWNLATGALRLT), 183–222 (GHISTVRGLAVSPRHPYLFSCGEDKMVKCWDLETNKVIRH), 225–264 (GHLSGVYTLALHPRLDLLVTGGRDGVARVWDMRTRSNIHV), 267–308 (GHTG…GVLT), 310–349 (HKKGIRSLATHPREFTFASASTGSIKQWKCPGGEFMQNFE), 350–388 (GHNAIINTLSVNEDNVLFSGGDNGSMSFWDWKTGYRYQT), and 399–438 (EAEAGIMTSTFDRTGLRLITGEADKTIKVWKQDDQATPET). Residues 432–452 (DQATPETHPVTWAPTLGRQRY) are disordered.

It belongs to the WD repeat PRL1/PRL2 family. Associated with the spliceosome.

The protein localises to the cytoplasm. It is found in the nucleus. Involved in pre-mRNA splicing and required for cell cycle progression at G2/M. This is Pre-mRNA-splicing factor prp46 (prp46) from Emericella nidulans (strain FGSC A4 / ATCC 38163 / CBS 112.46 / NRRL 194 / M139) (Aspergillus nidulans).